Reading from the N-terminus, the 727-residue chain is Non-structural protein 4 (727 aa).

2 disordered regions span residues 1–38 and 673–727; these read MNQS…PSEG and SMTL…KLSK. The span at 17 to 38 shows a compositional bias: polar residues; it reads RTPSALSSNSETPGSMSSPSEG. Residues 712-727 are compositionally biased toward basic residues; it reads SRRKARKARAASKLSK.

This is Non-structural protein 4 from Rice dwarf virus (isolate Akita) (RDV).